The primary structure comprises 155 residues: S-ribosylhomocysteine lyase (155 aa).

Fe cation contacts are provided by histidine 57, histidine 61, and cysteine 124.

It belongs to the LuxS family. Homodimer. It depends on Fe cation as a cofactor.

The catalysed reaction is S-(5-deoxy-D-ribos-5-yl)-L-homocysteine = (S)-4,5-dihydroxypentane-2,3-dione + L-homocysteine. In terms of biological role, involved in the synthesis of autoinducer 2 (AI-2) which is secreted by bacteria and is used to communicate both the cell density and the metabolic potential of the environment. The regulation of gene expression in response to changes in cell density is called quorum sensing. Catalyzes the transformation of S-ribosylhomocysteine (RHC) to homocysteine (HC) and 4,5-dihydroxy-2,3-pentadione (DPD). This Listeria monocytogenes serotype 4b (strain CLIP80459) protein is S-ribosylhomocysteine lyase.